Reading from the N-terminus, the 482-residue chain is O-phosphoseryl-tRNA(Sec) selenium transferase (482 aa).

Positions 1–36 (MKSSFGKKEGEYSRLVSKSSNKLLNSLWEKKQIPEE) are tetramerization. Arg-69 is a binding site for pyridoxal 5'-phosphate. Residues 90 to 100 (GRSGNLLEIQP) form a phosphate loop (P-loop) region. Substrate contacts are provided by Arg-91, Ser-92, and Gln-99. N6-(pyridoxal phosphate)lysine is present on Lys-277. Arg-306 contributes to the substrate binding site. Arg-388 is a tRNA binding site. Positions 461 to 482 (DRRGGSSGRRVPMNESFDMEND) are disordered.

Belongs to the SepSecS family. As to quaternary structure, homotetramer formed by a catalytic dimer and a non-catalytic dimer serving as a binding platform that orients tRNASec for catalysis. Each tetramer binds the CCA ends of two tRNAs which point to the active sites of the catalytic dimer. It depends on pyridoxal 5'-phosphate as a cofactor.

The protein localises to the cytoplasm. It catalyses the reaction O-phospho-L-seryl-tRNA(Sec) + selenophosphate + H2O = L-selenocysteinyl-tRNA(Sec) + 2 phosphate. It participates in aminoacyl-tRNA biosynthesis; selenocysteinyl-tRNA(Sec) biosynthesis; selenocysteinyl-tRNA(Sec) from L-seryl-tRNA(Sec) (archaeal/eukaryal route): step 2/2. In terms of biological role, converts O-phosphoseryl-tRNA(Sec) to selenocysteinyl-tRNA(Sec) required for selenoprotein biosynthesis. This Caenorhabditis briggsae protein is O-phosphoseryl-tRNA(Sec) selenium transferase (secs-1).